A 142-amino-acid chain; its full sequence is Interleukin-3 (142 aa).

The signal sequence occupies residues Met-1–Gln-18. N-linked (GlcNAc...) asparagine glycans are attached at residues Asn-33, Asn-88, and Asn-108. Cysteines 34 and 102 form a disulfide.

This sequence belongs to the IL-3 family. As to quaternary structure, monomer. Activated T-cells, mast cells, natural killer cells.

The protein resides in the secreted. Functionally, granulocyte/macrophage colony-stimulating factors are cytokines that act in hematopoiesis by controlling the production, differentiation, and function of 2 related white cell populations of the blood, the granulocytes and the monocytes-macrophages. Its function is as follows. This CSF induces granulocytes, macrophages, mast cells, stem cells, erythroid cells, eosinophils and megakaryocytes. This Saguinus oedipus (Cotton-top tamarin) protein is Interleukin-3 (IL3).